The sequence spans 288 residues: Acetyl-coenzyme A carboxylase carboxyl transferase subunit beta (288 aa).

A CoA carboxyltransferase N-terminal domain is found at 30–288 (IMTKCPKCKK…KMHQEVKTNA (259 aa)). Zn(2+) contacts are provided by cysteine 34, cysteine 37, cysteine 53, and cysteine 56. The C4-type zinc-finger motif lies at 34–56 (CPKCKKIMYTKELAENLNVCFNC).

This sequence belongs to the AccD/PCCB family. Acetyl-CoA carboxylase is a heterohexamer composed of biotin carboxyl carrier protein (AccB), biotin carboxylase (AccC) and two subunits each of ACCase subunit alpha (AccA) and ACCase subunit beta (AccD). Zn(2+) serves as cofactor.

It is found in the cytoplasm. It carries out the reaction N(6)-carboxybiotinyl-L-lysyl-[protein] + acetyl-CoA = N(6)-biotinyl-L-lysyl-[protein] + malonyl-CoA. It participates in lipid metabolism; malonyl-CoA biosynthesis; malonyl-CoA from acetyl-CoA: step 1/1. Functionally, component of the acetyl coenzyme A carboxylase (ACC) complex. Biotin carboxylase (BC) catalyzes the carboxylation of biotin on its carrier protein (BCCP) and then the CO(2) group is transferred by the transcarboxylase to acetyl-CoA to form malonyl-CoA. This Staphylococcus saprophyticus subsp. saprophyticus (strain ATCC 15305 / DSM 20229 / NCIMB 8711 / NCTC 7292 / S-41) protein is Acetyl-coenzyme A carboxylase carboxyl transferase subunit beta.